Reading from the N-terminus, the 425-residue chain is MASSNLIKQLQERGLIAQVTDEGALAERLAQGPIALYCGFDPTADSLHLGHLVPLLCLKRFQLAGHKPVALVGGATGLIGDPSFKATERKLNTADTVGEWVEKIRRQVSPFLDFDCGKNSAIAANNYDWFGGMNVLDFLRDIGKHFSVNQMINKEAVKQRLNRDDVGISFTEFSYNLLQGYDFASLNKQHDVELQIGGSDQWGNITSGIDLTRRMNQKQVYGLTVPLITKSDGTKFGKTEGGAIWLDASKTSPYKFYQFWINTADADVYRFLKFFTFMSLEDIDALEEEDKNSGKAPRAQYVLAEEVTRMVHGEAGLEAARRITQSLFSGALQDMTQDDFAQLAQDGMPIIELENGADLQQALVSAELVPSRGQARTMISSNAVTINGEKQADPEYTFSASDRLFDRYTLLRRGKKHYCLICWKA.

Tyr37 provides a ligand contact to L-tyrosine. Positions 42 to 51 match the 'HIGH' region motif; sequence PTADSLHLGH. Positions 175 and 179 each coordinate L-tyrosine. The short motif at 235 to 239 is the 'KMSKS' region element; it reads KFGKT. ATP is bound at residue Lys238. The S4 RNA-binding domain maps to 357-414; it reads ADLQQALVSAELVPSRGQARTMISSNAVTINGEKQADPEYTFSASDRLFDRYTLLRRG.

It belongs to the class-I aminoacyl-tRNA synthetase family. TyrS type 1 subfamily. As to quaternary structure, homodimer.

It is found in the cytoplasm. The catalysed reaction is tRNA(Tyr) + L-tyrosine + ATP = L-tyrosyl-tRNA(Tyr) + AMP + diphosphate + H(+). Catalyzes the attachment of tyrosine to tRNA(Tyr) in a two-step reaction: tyrosine is first activated by ATP to form Tyr-AMP and then transferred to the acceptor end of tRNA(Tyr). This chain is Tyrosine--tRNA ligase, found in Pectobacterium carotovorum subsp. carotovorum (strain PC1).